The following is a 198-amino-acid chain: Probable GTP-binding protein EngB (198 aa).

Positions 21-195 constitute an EngB-type G domain; it reads NFSEVAFLGR…EDIIINQTLG (175 aa). GTP contacts are provided by residues 29–36, 56–60, 81–84, 151–154, and 174–176; these read GRSNVGKS, GKTQL, DLPG, TKCD, and VSN. Mg(2+)-binding residues include serine 36 and threonine 58.

This sequence belongs to the TRAFAC class TrmE-Era-EngA-EngB-Septin-like GTPase superfamily. EngB GTPase family. It depends on Mg(2+) as a cofactor.

Functionally, necessary for normal cell division and for the maintenance of normal septation. This Campylobacter jejuni subsp. jejuni serotype O:2 (strain ATCC 700819 / NCTC 11168) protein is Probable GTP-binding protein EngB.